A 229-amino-acid polypeptide reads, in one-letter code: 2,3-bisphosphoglycerate-dependent phosphoglycerate mutase (229 aa).

Residues 8–15 (RHGKSEWN), 21–22 (TG), R60, 87–90 (ERHY), K98, 114–115 (RR), and 183–184 (GN) each bind substrate. Residue H9 is the Tele-phosphohistidine intermediate of the active site. The active-site Proton donor/acceptor is E87.

This sequence belongs to the phosphoglycerate mutase family. BPG-dependent PGAM subfamily. In terms of assembly, homodimer.

The catalysed reaction is (2R)-2-phosphoglycerate = (2R)-3-phosphoglycerate. Its pathway is carbohydrate degradation; glycolysis; pyruvate from D-glyceraldehyde 3-phosphate: step 3/5. Catalyzes the interconversion of 2-phosphoglycerate and 3-phosphoglycerate. This Nautilia profundicola (strain ATCC BAA-1463 / DSM 18972 / AmH) protein is 2,3-bisphosphoglycerate-dependent phosphoglycerate mutase.